The following is a 413-amino-acid chain: Probable alpha-amylase 2 (413 aa).

Residues 74 to 75 (YL) and 191 to 196 (RFDFAR) each bind substrate. The active-site Nucleophile is Asp-193. Catalysis depends on Glu-218, which acts as the Proton donor. Residues Trp-220, Ser-222, Gln-239, Asp-246, Lys-280, 286–288 (GWW), His-299, Gln-305, Lys-386, and Trp-411 contribute to the substrate site.

The protein belongs to the glycosyl hydrolase 13 family. It depends on Ca(2+) as a cofactor. In terms of tissue distribution, expressed in developing siliques.

It is found in the cytoplasm. Its subcellular location is the cytosol. It carries out the reaction Endohydrolysis of (1-&gt;4)-alpha-D-glucosidic linkages in polysaccharides containing three or more (1-&gt;4)-alpha-linked D-glucose units.. Functionally, probable alpha-amylase that does not seem to be required for breakdown of transitory starch in leaves. The sequence is that of Probable alpha-amylase 2 (AMY2) from Arabidopsis thaliana (Mouse-ear cress).